We begin with the raw amino-acid sequence, 420 residues long: Serine hydroxymethyltransferase (420 aa).

(6S)-5,6,7,8-tetrahydrofolate is bound by residues leucine 121 and 125–127 (GHL). Position 229 is an N6-(pyridoxal phosphate)lysine (lysine 229).

The protein belongs to the SHMT family. Homodimer. It depends on pyridoxal 5'-phosphate as a cofactor.

Its subcellular location is the cytoplasm. The enzyme catalyses (6R)-5,10-methylene-5,6,7,8-tetrahydrofolate + glycine + H2O = (6S)-5,6,7,8-tetrahydrofolate + L-serine. It functions in the pathway one-carbon metabolism; tetrahydrofolate interconversion. It participates in amino-acid biosynthesis; glycine biosynthesis; glycine from L-serine: step 1/1. In terms of biological role, catalyzes the reversible interconversion of serine and glycine with tetrahydrofolate (THF) serving as the one-carbon carrier. This reaction serves as the major source of one-carbon groups required for the biosynthesis of purines, thymidylate, methionine, and other important biomolecules. Also exhibits THF-independent aldolase activity toward beta-hydroxyamino acids, producing glycine and aldehydes, via a retro-aldol mechanism. The protein is Serine hydroxymethyltransferase of Glaesserella parasuis serovar 5 (strain SH0165) (Haemophilus parasuis).